Here is a 433-residue protein sequence, read N- to C-terminus: 26S proteasome regulatory subunit 7 (433 aa).

Positions 1-22 (MPDYLGADQRKTKEDEKDDKPI) are disordered. Positions 8-22 (DQRKTKEDEKDDKPI) are enriched in basic and acidic residues. The residue at position 116 (lysine 116) is an N6-acetyllysine. 216–223 (GPPGTGKT) is a binding site for ATP. Lysine 422 is modified (N6-acetyllysine).

Belongs to the AAA ATPase family. In terms of assembly, component of the 19S proteasome regulatory particle complex. The 26S proteasome consists of a 20S core particle (CP) and two 19S regulatory subunits (RP). The regulatory particle is made of a lid composed of 9 subunits, a base containing 6 ATPases including PSMC2 and few additional components. Interacts with NDC80/HEC; this interaction is detected only during M phase. Interacts and SQSTM1. Interacts with PAAF1. Directly interacts with TRIM5. Monoubiquitinated by RNF181. In terms of processing, phosphorylated. Dephosphorylated by UBLCP1 which impairs PSMC2 ATPase activity and disrupts 26S proteasome assembly.

Its subcellular location is the cytoplasm. The protein localises to the nucleus. In terms of biological role, component of the 26S proteasome, a multiprotein complex involved in the ATP-dependent degradation of ubiquitinated proteins. This complex plays a key role in the maintenance of protein homeostasis by removing misfolded or damaged proteins, which could impair cellular functions, and by removing proteins whose functions are no longer required. Therefore, the proteasome participates in numerous cellular processes, including cell cycle progression, apoptosis, or DNA damage repair. PSMC2 belongs to the heterohexameric ring of AAA (ATPases associated with diverse cellular activities) proteins that unfolds ubiquitinated target proteins that are concurrently translocated into a proteolytic chamber and degraded into peptides. This is 26S proteasome regulatory subunit 7 (PSMC2) from Pongo abelii (Sumatran orangutan).